The following is a 587-amino-acid chain: NADH-quinone oxidoreductase subunit C/D (587 aa).

Residues 1–178 (MAAPTTEHAE…EPFSLPDDVQ (178 aa)) are NADH dehydrogenase I subunit C. The interval 202-587 (DFLFLNLGPN…IDFVMADVDR (386 aa)) is NADH dehydrogenase I subunit D.

In the N-terminal section; belongs to the complex I 30 kDa subunit family. This sequence in the C-terminal section; belongs to the complex I 49 kDa subunit family. NDH-1 is composed of 13 different subunits. Subunits NuoB, CD, E, F, and G constitute the peripheral sector of the complex.

It localises to the cell inner membrane. The catalysed reaction is a quinone + NADH + 5 H(+)(in) = a quinol + NAD(+) + 4 H(+)(out). Its function is as follows. NDH-1 shuttles electrons from NADH, via FMN and iron-sulfur (Fe-S) centers, to quinones in the respiratory chain. The immediate electron acceptor for the enzyme in this species is believed to be ubiquinone. Couples the redox reaction to proton translocation (for every two electrons transferred, four hydrogen ions are translocated across the cytoplasmic membrane), and thus conserves the redox energy in a proton gradient. The protein is NADH-quinone oxidoreductase subunit C/D of Methylococcus capsulatus (strain ATCC 33009 / NCIMB 11132 / Bath).